The chain runs to 120 residues: BLOC-1-related complex subunit 8 (120 aa).

Residues 101–120 are disordered; sequence MNTSAQGHSQEKLSPPPSLA. A Phosphoserine modification is found at serine 109.

Belongs to the BORCS8 family. In terms of assembly, component of the BLOC-one-related complex (BORC) which is composed of BLOC1S1, BLOC1S2, BORCS5, BORCS6, BORCS7, BORCS8, KXD1 and SNAPIN.

The protein resides in the lysosome membrane. In terms of biological role, as part of the BLOC-one-related complex (BORC), it plays a role in the movement and localization of lysosomes at the cell periphery. Associated with the cytosolic face of lysosomes, BORC recruits ARL8B to the lysosomal membrane and couples lysosomes to microtubule plus-end-directed kinesin motors, driving lysosome movement toward the cell periphery. The protein is BLOC-1-related complex subunit 8 of Mus musculus (Mouse).